An 815-amino-acid polypeptide reads, in one-letter code: Probable E3 ubiquitin-protein ligase hulA (815 aa).

Residues 1–112 (MGSNLPSQPN…EMGGDEMLTR (112 aa)) form the C2 domain. Disordered regions lie at residues 134–237 (NLST…GWER) and 253–353 (RTTT…YFVD). Low complexity-rich tracts occupy residues 165–185 (ASAA…SNPS) and 202–212 (APGAAAGATPT). Polar residues-rich tracts occupy residues 213–226 (NTQG…SFED) and 253–270 (RTTT…QTQR). The WW 1 domain maps to 229 to 262 (GRLPAGWERREDNLGRTYYVDHNTRTTTWTRPSS). Residues 279–294 (LERRAHQSRMLPEDRT) are compositionally biased toward basic and acidic residues. Residues 295–308 (GANSPNLPETSQQA) show a composition bias toward polar residues. Over residues 324–333 (ATGATTAGTG) the composition is skewed to low complexity. WW domains are found at residues 333 to 366 (GELP…DPRR) and 393 to 426 (GPLP…DPRL). Positions 482 to 815 (SASDLKKRLM…VEETLGFGQE (334 aa)) constitute an HECT domain. The Glycyl thioester intermediate role is filled by cysteine 783.

The protein belongs to the RSP5/NEDD4 family. Interacts with creD.

The protein localises to the cytoplasm. The catalysed reaction is S-ubiquitinyl-[E2 ubiquitin-conjugating enzyme]-L-cysteine + [acceptor protein]-L-lysine = [E2 ubiquitin-conjugating enzyme]-L-cysteine + N(6)-ubiquitinyl-[acceptor protein]-L-lysine.. It functions in the pathway protein modification; protein ubiquitination. Functionally, E3 ubiquitin-protein ligase which accepts ubiquitin from an E2 ubiquitin-conjugating enzyme in the form of a thioester and then directly transfers the ubiquitin to targeted substrates. Probably involved in the regulatory network controlling carbon source utilization. This is Probable E3 ubiquitin-protein ligase hulA (hulA) from Aspergillus clavatus (strain ATCC 1007 / CBS 513.65 / DSM 816 / NCTC 3887 / NRRL 1 / QM 1276 / 107).